Reading from the N-terminus, the 441-residue chain is Protein kinase C and casein kinase substrate in neurons protein 1 (441 aa).

Phosphoserine occurs at positions 2 and 76. One can recognise an F-BAR domain in the interval 10–280; the sequence is EEITDSFWEV…AIRGADAQED (271 aa). Residues 23–272 are a coiled coil; sequence KRTVKRIDDG…HVYRELEQAI (250 aa). T181 is subject to Phosphothreonine. Residues 297–380 are disordered; it reads PQFEEWNPDL…ANGGANPFED (84 aa). Over residues 311–321 the composition is skewed to basic and acidic residues; the sequence is AKKEKQPKKAE. A compositionally biased stretch (polar residues) spans 324-355; it reads TLSNATGAVESTSQAGDRGSVSSYDRGQTYAT. A phosphoserine mark is found at S343, S345, S346, S358, and S362. One can recognise an SH3 domain in the interval 382-441; that stretch reads AKGVRVRALYDYDGQEQDELSFKAGDELTKLGEEDEQGWCRGRLDSGQLGLYPANYVEAI. Y391 bears the Phosphotyrosine mark. S402 and S427 each carry phosphoserine.

Belongs to the PACSIN family. As to quaternary structure, homodimer. May form heterooligomers with other PACSINs. Interacts with both COBL and DBNL. Identified in a complex composed of COBL, PACSIN1 and WASL. Interacts with EHD3. Interacts (via SH3 domain) with SYNJ1 and WASL. Interacts (via SH3 domain) with DNM1; the interaction is reduced by DNM1 phosphorylation. Interacts with DNM2 and DNM3. Interacts with MAPT. Interacts with EHD1. Interacts with TRPV4. In terms of processing, phosphorylated by casein kinase 2 (CK2) and protein kinase C (PKC). As to expression, highly expressed in brain. Detected in hippocampus and dorsal root ganglion neurons. Detected in rod photoreceptor terminals in the outer plexiform layer of the retina (at protein level). In CNS neurons, high levels in the pyramidal cells of the hippocampus, Purkinje cells of the cerebellum and large neurons of the cortex and brain stem.

It localises to the cytoplasm. The protein localises to the cell projection. It is found in the synapse. The protein resides in the synaptosome. Its subcellular location is the ruffle membrane. It localises to the membrane. The protein localises to the cytoplasmic vesicle membrane. It is found in the cytosol. The protein resides in the cell membrane. Functionally, binds to membranes via its F-BAR domain and mediates membrane tubulation. Plays a role in the reorganization of the microtubule cytoskeleton via its interaction with MAPT; this decreases microtubule stability and inhibits MAPT-induced microtubule polymerization. Plays a role in cellular transport processes by recruiting DNM1, DNM2 and DNM3 to membranes. Plays a role in the reorganization of the actin cytoskeleton and in neuron morphogenesis via its interaction with COBL and WASL, and by recruiting COBL to the cell cortex. Plays a role in the regulation of neurite formation, neurite branching and the regulation of neurite length. Required for normal synaptic vesicle endocytosis; this process retrieves previously released neurotransmitters to accommodate multiple cycles of neurotransmission. Required for normal excitatory and inhibitory synaptic transmission. The chain is Protein kinase C and casein kinase substrate in neurons protein 1 (Pacsin1) from Mus musculus (Mouse).